The following is a 396-amino-acid chain: E3 ubiquitin-protein transferase MAEA (396 aa).

Residues 1-124 (MAVQESAVQL…AAASVWKRKR (124 aa)) are extracellular and involved in cell to cell contact. The residue at position 28 (Thr-28) is a Phosphothreonine. The LisH domain maps to 121 to 153 (KRKRMDRMMVEHLLRCGYYNTAVKLARQSGIED). In terms of domain architecture, CTLH spans 159-216 (MFLTAKEVEESLERRETATCLAWCHDNKSRLRKMKSCLEFSLRIQEFIELIRQNKRLD). The RING-Gid-type zinc finger occupies 314–381 (CPVCSRSLNK…QDDKVVCPRT (68 aa)).

Identified in the CTLH complex that contains GID4, RANBP9 and/or RANBP10, MKLN1, MAEA, RMND5A (or alternatively its paralog RMND5B), GID8, ARMC8, WDR26 and YPEL5. Within this complex, MAEA, RMND5A (or alternatively its paralog RMND5B), GID8, WDR26, and RANBP9 and/or RANBP10 form the catalytic core, while GID4, MKLN1, ARMC8 and YPEL5 have ancillary roles. Interacts with F-actin. In terms of processing, autoubiquitinated as component of the CTLH E3 ubiquitin-protein ligase complex (in vitro).

The protein localises to the cytoplasm. It is found in the nucleus. It localises to the nucleoplasm. The protein resides in the nucleus matrix. Its subcellular location is the cell membrane. The protein localises to the cytoskeleton. It catalyses the reaction S-ubiquitinyl-[E2 ubiquitin-conjugating enzyme]-L-cysteine + [acceptor protein]-L-lysine = [E2 ubiquitin-conjugating enzyme]-L-cysteine + N(6)-ubiquitinyl-[acceptor protein]-L-lysine.. Core component of the CTLH E3 ubiquitin-protein ligase complex that selectively accepts ubiquitin from UBE2H and mediates ubiquitination and subsequent proteasomal degradation of the transcription factor HBP1. MAEA and RMND5A are both required for catalytic activity of the CTLH E3 ubiquitin-protein ligase complex. MAEA is required for normal cell proliferation. The CTLH E3 ubiquitin-protein ligase complex is not required for the degradation of enzymes involved in gluconeogenesis, such as FBP1. Plays a role in erythroblast enucleation during erythrocyte maturation and in the development of mature macrophages. Mediates the attachment of erythroid cell to mature macrophages; this MAEA-mediated contact inhibits erythroid cell apoptosis. Participates in erythroblastic island formation, which is the functional unit of definitive erythropoiesis. Associates with F-actin to regulate actin distribution in erythroblasts and macrophages. May contribute to nuclear architecture and cells division events. The chain is E3 ubiquitin-protein transferase MAEA (MAEA) from Macaca fascicularis (Crab-eating macaque).